A 422-amino-acid polypeptide reads, in one-letter code: Zinc finger protein 550 (422 aa).

Residues 12–83 enclose the KRAB domain; sequence VTFKDVAVTF…KRGLSHATCA (72 aa). A disordered region spans residues 113–158; the sequence is LESSTSSDSRLGRARDEEGLLEMQKGKVTPETDLHKETHLGKVSLE. Over residues 122–152 the composition is skewed to basic and acidic residues; the sequence is RLGRARDEEGLLEMQKGKVTPETDLHKETHL. 8 consecutive C2H2-type zinc fingers follow at residues 203–225, 231–253, 259–281, 287–309, 315–337, 343–365, 371–393, and 399–421; these read YKCK…QRVH, YECN…YLIH, YKCL…HPIH, YECS…NRTH, FECK…YIIH, YDCM…QRIH, YECT…SVIH, and YKCI…QRVH.

It belongs to the krueppel C2H2-type zinc-finger protein family.

Its subcellular location is the nucleus. May be involved in transcriptional regulation. The polypeptide is Zinc finger protein 550 (ZNF550) (Homo sapiens (Human)).